A 324-amino-acid polypeptide reads, in one-letter code: Acetyl-coenzyme A carboxylase carboxyl transferase subunit alpha (324 aa).

Residues 44 to 298 enclose the CoA carboxyltransferase C-terminal domain; the sequence is RFQDKLTKLQ…RKELIKQLNI (255 aa).

Belongs to the AccA family. As to quaternary structure, acetyl-CoA carboxylase is a heterohexamer composed of biotin carboxyl carrier protein (accB), biotin carboxylase (accC) and two subunits each of ACCase subunit alpha (accA) and ACCase subunit beta (accD).

It localises to the plastid. It is found in the chloroplast. The catalysed reaction is N(6)-carboxybiotinyl-L-lysyl-[protein] + acetyl-CoA = N(6)-biotinyl-L-lysyl-[protein] + malonyl-CoA. It participates in lipid metabolism; malonyl-CoA biosynthesis; malonyl-CoA from acetyl-CoA: step 1/1. Component of the acetyl coenzyme A carboxylase (ACC) complex. First, biotin carboxylase catalyzes the carboxylation of biotin on its carrier protein (BCCP) and then the CO(2) group is transferred by the carboxyltransferase to acetyl-CoA to form malonyl-CoA. The sequence is that of Acetyl-coenzyme A carboxylase carboxyl transferase subunit alpha from Porphyra purpurea (Red seaweed).